Here is a 398-residue protein sequence, read N- to C-terminus: Histidinol-phosphate aminotransferase (398 aa).

Over residues 1 to 10 (MTGQRATPQP) the composition is skewed to polar residues. The tract at residues 1–30 (MTGQRATPQPTLDDLPLRDDLRGKSPYGAP) is disordered. Residue lysine 234 is modified to N6-(pyridoxal phosphate)lysine.

It belongs to the class-II pyridoxal-phosphate-dependent aminotransferase family. Histidinol-phosphate aminotransferase subfamily. Homodimer. The cofactor is pyridoxal 5'-phosphate.

The enzyme catalyses L-histidinol phosphate + 2-oxoglutarate = 3-(imidazol-4-yl)-2-oxopropyl phosphate + L-glutamate. It participates in amino-acid biosynthesis; L-histidine biosynthesis; L-histidine from 5-phospho-alpha-D-ribose 1-diphosphate: step 7/9. The chain is Histidinol-phosphate aminotransferase from Mycobacterium avium (strain 104).